A 71-amino-acid polypeptide reads, in one-letter code: Large ribosomal subunit protein uL29 (71 aa).

This sequence belongs to the universal ribosomal protein uL29 family.

The protein is Large ribosomal subunit protein uL29 of Roseiflexus sp. (strain RS-1).